The chain runs to 235 residues: MAKDSTGRMRVTVKSAGRMKLSSKLWLERQLNDPYVAQAKRDGYRSRAAYKLLEIDDKHHFLKPGASVVDLGAAPGGWSQIAAKRVGATEGKGKVVAIDLLEMPEIVGVTFAQLDFLSPAAPEKLLAMIGGRVDVVMSDMAANTTGHRKTDQLRIVGLVEDAAAFACDVLKPGGTFVAKVFQSGADATLMTQLKRDFASVKHLKPQASRKDSSERYVLALGFRGPETTNWSNPPD.

Residues glycine 76, tryptophan 78, aspartate 99, aspartate 115, and aspartate 139 each contribute to the S-adenosyl-L-methionine site. The Proton acceptor role is filled by lysine 179.

This sequence belongs to the class I-like SAM-binding methyltransferase superfamily. RNA methyltransferase RlmE family.

The protein resides in the cytoplasm. The enzyme catalyses uridine(2552) in 23S rRNA + S-adenosyl-L-methionine = 2'-O-methyluridine(2552) in 23S rRNA + S-adenosyl-L-homocysteine + H(+). Functionally, specifically methylates the uridine in position 2552 of 23S rRNA at the 2'-O position of the ribose in the fully assembled 50S ribosomal subunit. This Rhodopseudomonas palustris (strain BisA53) protein is Ribosomal RNA large subunit methyltransferase E.